The following is a 495-amino-acid chain: Catalase B (495 aa).

A disordered region spans residues 1-25 (MSNNKKLTSLFGAPVSDRENSMTAG). Active-site residues include histidine 55 and asparagine 128. Tyrosine 338 lines the heme pocket.

It belongs to the catalase family. Homodimer. It depends on heme as a cofactor.

The enzyme catalyses 2 H2O2 = O2 + 2 H2O. Decomposes hydrogen peroxide into water and oxygen; serves to protect cells from the toxic effects of hydrogen peroxide. This is Catalase B (katB) from Staphylococcus xylosus.